We begin with the raw amino-acid sequence, 483 residues long: Cobyric acid synthase (483 aa).

Residues 251 to 438 (ALIVAVPMLP…LHGVFSADRF (188 aa)) enclose the GATase cobBQ-type domain. Cys333 (nucleophile) is an active-site residue. His430 is an active-site residue.

The protein belongs to the CobB/CobQ family. CobQ subfamily.

The protein operates within cofactor biosynthesis; adenosylcobalamin biosynthesis. In terms of biological role, catalyzes amidations at positions B, D, E, and G on adenosylcobyrinic A,C-diamide. NH(2) groups are provided by glutamine, and one molecule of ATP is hydrogenolyzed for each amidation. The polypeptide is Cobyric acid synthase (Brucella canis (strain ATCC 23365 / NCTC 10854 / RM-666)).